The sequence spans 479 residues: Ribulose bisphosphate carboxylase large chain (479 aa).

The propeptide occupies 1-2; it reads MS. Asn123 and Thr173 together coordinate substrate. The active-site Proton acceptor is the Lys175. Lys177 contacts substrate. Residues Lys201, Asp203, and Glu204 each contribute to the Mg(2+) site. Lys201 bears the N6-carboxylysine mark. Position 208 is a phosphoserine (Ser208). His294 serves as the catalytic Proton acceptor. Residues Arg295 and His327 each coordinate substrate. Residue Thr330 is modified to Phosphothreonine. Residue Ser379 participates in substrate binding.

This sequence belongs to the RuBisCO large chain family. Type I subfamily. In terms of assembly, heterohexadecamer of 8 large chains and 8 small chains; disulfide-linked. The disulfide link is formed within the large subunit homodimers. Mg(2+) is required as a cofactor. Post-translationally, the disulfide bond which can form in the large chain dimeric partners within the hexadecamer appears to be associated with oxidative stress and protein turnover.

Its subcellular location is the plastid. The protein localises to the chloroplast. The catalysed reaction is 2 (2R)-3-phosphoglycerate + 2 H(+) = D-ribulose 1,5-bisphosphate + CO2 + H2O. The enzyme catalyses D-ribulose 1,5-bisphosphate + O2 = 2-phosphoglycolate + (2R)-3-phosphoglycerate + 2 H(+). RuBisCO catalyzes two reactions: the carboxylation of D-ribulose 1,5-bisphosphate, the primary event in carbon dioxide fixation, as well as the oxidative fragmentation of the pentose substrate in the photorespiration process. Both reactions occur simultaneously and in competition at the same active site. The sequence is that of Ribulose bisphosphate carboxylase large chain from Olimarabidopsis pumila (Dwarf rocket).